We begin with the raw amino-acid sequence, 94 residues long: Co-chaperonin GroES (94 aa).

The protein belongs to the GroES chaperonin family. Heptamer of 7 subunits arranged in a ring. Interacts with the chaperonin GroEL.

It is found in the cytoplasm. Functionally, together with the chaperonin GroEL, plays an essential role in assisting protein folding. The GroEL-GroES system forms a nano-cage that allows encapsulation of the non-native substrate proteins and provides a physical environment optimized to promote and accelerate protein folding. GroES binds to the apical surface of the GroEL ring, thereby capping the opening of the GroEL channel. The protein is Co-chaperonin GroES of Streptococcus agalactiae.